The chain runs to 239 residues: Lactate utilization protein A (239 aa).

The protein belongs to the LutA/YkgE family.

In terms of biological role, is involved in L-lactate degradation and allows cells to grow with lactate as the sole carbon source. This chain is Lactate utilization protein A, found in Shouchella clausii (strain KSM-K16) (Alkalihalobacillus clausii).